We begin with the raw amino-acid sequence, 64 residues long: Small ribosomal subunit protein eS17 (64 aa).

The protein belongs to the eukaryotic ribosomal protein eS17 family.

The chain is Small ribosomal subunit protein eS17 from Methanosarcina mazei (strain ATCC BAA-159 / DSM 3647 / Goe1 / Go1 / JCM 11833 / OCM 88) (Methanosarcina frisia).